A 174-amino-acid polypeptide reads, in one-letter code: MEWKDIKGYEGHYQVSNTGEVYSIKSGKTLKHQIPKDGYHRIGLFKGGKGKTFQVHRLVAIHFCEGYEEGLVVDHKDGNKDNNLSTNLRWVTQKINVENQMSRGTLNVSKAQQIAKIKNQKPIIVISPDGIEKEYPSTKCACEELGLTRGKVTDVLKGHRIHHKGYTFRYKLNG.

The chain is DNA endonuclease I-HmuI from Bacillus subtilis (Bacteriophage SP01).